The primary structure comprises 105 residues: Heat shock protein HspQ (105 aa).

Positions 74–105 are disordered; that stretch reads SSELQDERPEQPSMDELAQTIRKQRQAPRLRN. A compositionally biased stretch (basic residues) spans 95-105; that stretch reads RKQRQAPRLRN.

This sequence belongs to the HspQ family.

The protein resides in the cytoplasm. Its function is as follows. Involved in the degradation of certain denaturated proteins, including DnaA, during heat shock stress. The sequence is that of Heat shock protein HspQ from Shigella dysenteriae serotype 1 (strain Sd197).